Reading from the N-terminus, the 227-residue chain is PKHD-type hydroxylase Caul_0045 (227 aa).

One can recognise a Fe2OG dioxygenase domain in the interval Thr-78 to Ser-178. Fe cation is bound by residues His-96, Asp-98, and His-159. Arg-169 provides a ligand contact to 2-oxoglutarate.

The cofactor is Fe(2+). It depends on L-ascorbate as a cofactor.

The protein is PKHD-type hydroxylase Caul_0045 of Caulobacter sp. (strain K31).